We begin with the raw amino-acid sequence, 290 residues long: Protoheme IX farnesyltransferase 1 (290 aa).

8 consecutive transmembrane segments (helical) span residues 8–28 (ITKPGIIFGNLISVAAGFFLA), 36–56 (FLLLLTTLVGVGLVIASGCVV), 85–105 (AAFVYALVLLLNGTALLFQVV), 108–128 (LSAVVVLLGYVFYVFFYTMWY), 131–151 (NSVYGTLVGSISGAVPPLVGY), 152–172 (LAVTNYISLEATLLFVMFCLW), 211–231 (AYVVAFGVVAIGLFMLGEAGY), and 269–289 (LLVVMGISGVLGLELIPLPFI).

This sequence belongs to the UbiA prenyltransferase family. Protoheme IX farnesyltransferase subfamily.

The protein localises to the cell inner membrane. The enzyme catalyses heme b + (2E,6E)-farnesyl diphosphate + H2O = Fe(II)-heme o + diphosphate. The protein operates within porphyrin-containing compound metabolism; heme O biosynthesis; heme O from protoheme: step 1/1. Functionally, converts heme B (protoheme IX) to heme O by substitution of the vinyl group on carbon 2 of heme B porphyrin ring with a hydroxyethyl farnesyl side group. The polypeptide is Protoheme IX farnesyltransferase 1 (Vibrio campbellii (strain ATCC BAA-1116)).